A 479-amino-acid chain; its full sequence is D-alanyl-D-alanine carboxypeptidase DacB (479 aa).

Residues 1-26 form the signal peptide; sequence MKKLSSISTALGSFLLSVSFSLPTFA. Residue Ser69 is the Acyl-ester intermediate of the active site. Lys72 (proton acceptor) is an active-site residue. The active site involves Ser310. Lys420 contributes to the substrate binding site.

It belongs to the peptidase S13 family.

The protein resides in the periplasm. It catalyses the reaction Preferential cleavage: (Ac)2-L-Lys-D-Ala-|-D-Ala. Also transpeptidation of peptidyl-alanyl moieties that are N-acyl substituents of D-alanine.. It functions in the pathway cell wall biogenesis; peptidoglycan biosynthesis. Not involved in transpeptidation but exclusively catalyzes a DD-carboxypeptidase and DD-endopeptidase reaction. The chain is D-alanyl-D-alanine carboxypeptidase DacB (dacB) from Haemophilus influenzae (strain ATCC 51907 / DSM 11121 / KW20 / Rd).